Consider the following 374-residue polypeptide: Beta sliding clamp (374 aa).

This sequence belongs to the beta sliding clamp family. In terms of assembly, forms a ring-shaped head-to-tail homodimer around DNA which binds and tethers DNA polymerases and other proteins to the DNA. The DNA replisome complex has a single clamp-loading complex (3 tau and 1 each of delta, delta', psi and chi subunits) which binds 3 Pol III cores (1 core on the leading strand and 2 on the lagging strand) each with a beta sliding clamp dimer. Additional proteins in the replisome are other copies of gamma, psi and chi, Ssb, DNA helicase and RNA primase.

The protein resides in the cytoplasm. Functionally, confers DNA tethering and processivity to DNA polymerases and other proteins. Acts as a clamp, forming a ring around DNA (a reaction catalyzed by the clamp-loading complex) which diffuses in an ATP-independent manner freely and bidirectionally along dsDNA. Initially characterized for its ability to contact the catalytic subunit of DNA polymerase III (Pol III), a complex, multichain enzyme responsible for most of the replicative synthesis in bacteria; Pol III exhibits 3'-5' exonuclease proofreading activity. The beta chain is required for initiation of replication as well as for processivity of DNA replication. This chain is Beta sliding clamp (dnaN), found in Helicobacter pylori (strain ATCC 700392 / 26695) (Campylobacter pylori).